The primary structure comprises 492 residues: JmjC domain-containing histone demethylation protein 1 (492 aa).

The PHD-type; atypical zinc finger occupies 4 to 72 (PNICQHCQLK…SYRCPNHKEG (69 aa)). The 156-residue stretch at 254–409 (TAVRQNDLVD…THLKIVEIEK (156 aa)) folds into the JmjC domain. T302 contributes to the substrate binding site. Fe cation is bound by residues H305 and D307. K322 lines the substrate pocket. A Fe cation-binding site is contributed by H377.

Belongs to the JHDM1 histone demethylase family. The cofactor is Fe(2+).

The protein resides in the nucleus. The enzyme catalyses N(6),N(6)-dimethyl-L-lysyl(36)-[histone H3] + 2 2-oxoglutarate + 2 O2 = L-lysyl(36)-[histone H3] + 2 formaldehyde + 2 succinate + 2 CO2. Functionally, histone demethylase that specifically demethylates 'Lys-36' of histone H3, thereby playing a central role in histone code. Does not demethylate H3 'Lys-4' nor 'Lys-79'. The polypeptide is JmjC domain-containing histone demethylation protein 1 (JHD1) (Saccharomyces cerevisiae (strain ATCC 204508 / S288c) (Baker's yeast)).